The primary structure comprises 351 residues: Cytoplasmic dynein 2 light intermediate chain 1 (351 aa).

The protein belongs to the dynein light intermediate chain family. Light intermediate chain of the cytoplasmic dynein complex 2, a multisubunit complex composed at least of eleven different proteins. The cytoplasmic dynein 2 complex consists of two catalytic heavy chains (HCs) and a number of non-catalytic subunits presented by intermediate chains (ICs), light intermediate chains (LICs) and light chains (LCs). Among them, a heavy chain (DYNC2H1), two intermediate chains (DYNC2I2 and DYNC2I1), a light intermediate chain (DYNC2LI1), and a light chain (DYNLT2B) are unique to the dynein-2 complex, but a subset of light chains are also shared by dynein-1 and dynein-2 complexes. Dynein-2 complex is built around two copies of cytoplasmic dynein 2 heavy chain 1 (DYNC2H1). The C-terminal region of DYNC2H1 forms the motor domain, which converts the energy from ATP hydrolysis into movement. Its N-terminal region forms the tail, an extended structure that binds the other subunits and holds the two heavy chains in a homodimer. Interacts with DYNC2H1 (via N-terminus); this interaction stabilizes the dynein-2 complex structure. As to expression, expressed in bone, brain, kidney, and cartilage. Lower expression in heart, liver, lung, placenta and thymus.

It is found in the golgi apparatus. The protein resides in the cytoplasm. The protein localises to the cell projection. Its subcellular location is the cilium. It localises to the cytoskeleton. It is found in the cilium basal body. The protein resides in the cilium axoneme. The protein localises to the microtubule organizing center. Its subcellular location is the centrosome. Functionally, acts as one of several non-catalytic accessory components of the cytoplasmic dynein 2 complex (dynein-2 complex), a motor protein complex that drives the movement of cargos along microtubules within cilia and flagella in concert with the intraflagellar transport (IFT) system, facilitating the assembly of these organelles. Involved in the regulation of ciliary length. The protein is Cytoplasmic dynein 2 light intermediate chain 1 (DYNC2LI1) of Homo sapiens (Human).